The chain runs to 639 residues: Mediator of RNA polymerase II transcription subunit 17 (639 aa).

The stretch at 160–187 (RLQSFNAAADKLLKSASRLENEVASETR) forms a coiled coil.

The protein belongs to the Mediator complex subunit 17 family. Component of the Mediator complex.

It localises to the nucleus. In terms of biological role, component of the Mediator complex, a coactivator involved in the regulated transcription of nearly all RNA polymerase II-dependent genes. Mediator functions as a bridge to convey information from gene-specific regulatory proteins to the basal RNA polymerase II transcription machinery. Mediator is recruited to promoters by direct interactions with regulatory proteins and serves as a scaffold for the assembly of a functional preinitiation complex with RNA polymerase II and the general transcription factors. In Aspergillus fumigatus (strain ATCC MYA-4609 / CBS 101355 / FGSC A1100 / Af293) (Neosartorya fumigata), this protein is Mediator of RNA polymerase II transcription subunit 17 (srb4).